The chain runs to 708 residues: Ubiquitin thioesterase ZRANB1 (708 aa).

Residues 3–33 (ERGIKWACEYCTYENWPSAIKCTMCRAQRPS) form a RanBP2-type 1 zinc finger. Zn(2+) is bound by residues cysteine 10, cysteine 13, cysteine 24, and cysteine 27. Positions 38–73 (TEDPFKSGSSDVGRDWDPSSTEGGSSPLICPDSSAR) are disordered. 2 consecutive RanBP2-type zinc fingers follow at residues 84–113 (NANK…QRRT) and 149–178 (RTQH…PRPN). Cysteine 90, cysteine 93, cysteine 104, cysteine 107, cysteine 155, cysteine 158, cysteine 169, and cysteine 172 together coordinate Zn(2+). A disordered region spans residues 200–223 (RARWRGSCSSGNSQRRSPPTMKRD). A compositionally biased stretch (polar residues) spans 206–216 (SCSSGNSQRRS). ANK repeat units follow at residues 260–290 (KKTD…SGGD) and 313–340 (YTLV…QQAA). The OTU domain occupies 432–592 (LYALWNRTAG…RGHFSALVAM (161 aa)). Cysteine 443 acts as the Nucleophile in catalysis. Histidine 585 acts as the Proton acceptor in catalysis.

Belongs to the peptidase C64 family. As to quaternary structure, interacts with TRAF6. Interacts with APC.

It is found in the cytoplasm. The protein resides in the nucleus. It carries out the reaction Thiol-dependent hydrolysis of ester, thioester, amide, peptide and isopeptide bonds formed by the C-terminal Gly of ubiquitin (a 76-residue protein attached to proteins as an intracellular targeting signal).. Its function is as follows. Ubiquitin thioesterase, which specifically hydrolyzes 'Lys-29'-linked and 'Lys-33'-linked diubiquitin. Also cleaves 'Lys-63'-linked chains, but with 40-fold less efficiency compared to 'Lys-29'-linked ones. Positive regulator of the Wnt signaling pathway that deubiquitinates APC protein, a negative regulator of Wnt-mediated transcription. Acts as a regulator of autophagy by mediating deubiquitination of PIK3C3/VPS34, thereby promoting autophagosome maturation. Plays a role in the regulation of cell morphology and cytoskeletal organization. Required in the stress fiber dynamics and cell migration. This chain is Ubiquitin thioesterase ZRANB1, found in Bos taurus (Bovine).